Reading from the N-terminus, the 327-residue chain is Malate dehydrogenase (327 aa).

Residue 12 to 18 (GAAGQIA) participates in NAD(+) binding. Residues Arg-93 and Arg-99 each contribute to the substrate site. NAD(+)-binding positions include Asn-106, Gln-113, and 130 to 132 (VGN). Residues Asn-132 and Arg-163 each coordinate substrate. His-188 serves as the catalytic Proton acceptor.

It belongs to the LDH/MDH superfamily. MDH type 2 family.

It carries out the reaction (S)-malate + NAD(+) = oxaloacetate + NADH + H(+). Catalyzes the reversible oxidation of malate to oxaloacetate. This chain is Malate dehydrogenase, found in Paraburkholderia phytofirmans (strain DSM 17436 / LMG 22146 / PsJN) (Burkholderia phytofirmans).